A 472-amino-acid chain; its full sequence is Chromosomal replication initiator protein DnaA (472 aa).

The tract at residues 1 to 73 (MSNMEHDRWS…LTCWQAELPE (73 aa)) is domain I, interacts with DnaA modulators. The interval 73–128 (EVCRIDLTVRSPMRAAVAKEAAAPVEHRRAEHRPATETRSHATVPASSNHDALGGS) is domain II. A disordered region spans residues 92 to 127 (EAAAPVEHRRAEHRPATETRSHATVPASSNHDALGG). Residues 97–112 (VEHRRAEHRPATETRS) show a composition bias toward basic and acidic residues. The domain III, AAA+ region stretch occupies residues 129–351 (PLDPRLTFAS…GAINRLLAHS (223 aa)). ATP-binding residues include G176, G178, K179, and T180. The domain IV, binds dsDNA stretch occupies residues 352–472 (KLNAQPVTLE…VDSLKRQLQE (121 aa)).

This sequence belongs to the DnaA family. As to quaternary structure, oligomerizes as a right-handed, spiral filament on DNA at oriC.

The protein resides in the cytoplasm. In terms of biological role, plays an essential role in the initiation and regulation of chromosomal replication. ATP-DnaA binds to the origin of replication (oriC) to initiate formation of the DNA replication initiation complex once per cell cycle. Binds the DnaA box (a 9 base pair repeat at the origin) and separates the double-stranded (ds)DNA. Forms a right-handed helical filament on oriC DNA; dsDNA binds to the exterior of the filament while single-stranded (ss)DNA is stabiized in the filament's interior. The ATP-DnaA-oriC complex binds and stabilizes one strand of the AT-rich DNA unwinding element (DUE), permitting loading of DNA polymerase. After initiation quickly degrades to an ADP-DnaA complex that is not apt for DNA replication. Binds acidic phospholipids. The chain is Chromosomal replication initiator protein DnaA from Rhodopseudomonas palustris (strain HaA2).